We begin with the raw amino-acid sequence, 407 residues long: MSDLQKSFAKSKLAKLPPEPPPIPESVADEDDDSGSSTETVTPSPVKQLFARPGGTRGFFDQELYLQRRVNDLDIVHHVYLTSPTNSGPLFVMHHGAGSSGLSFANCAAEIRKILPNAGILSADARDHGSTSVKRASEDGEADPETARLDLSLDTLNQDLLFVIRETQAKMGWETLPDIVLVGHSLGGAVITDVAKKGELGGKLLAYAVLDVVEGSAMDALQSMETYLSTRPSRFPSLPSGIEWHTRSRTIRNRTSARVSVPSLLYHEDVPKDPSKPWVWRTNLAETKPFWEGWFVGLSRKFLEARGGKLLLLAGTDRLDKELMIGQMQGKYQLQVFPDAGHFIQEDQPARTAQILVDFYKRNDRSALVLPPKVADMQASAAMKKGAGAGVPLGKAEGGTTGSFKRS.

Residues 1-53 (MSDLQKSFAKSKLAKLPPEPPPIPESVADEDDDSGSSTETVTPSPVKQLFARP) are disordered. Residues Ser-185, Asp-211, and His-342 contribute to the active site. Residues 388–401 (GAGVPLGKAEGGTT) show a composition bias toward gly residues. Residues 388–407 (GAGVPLGKAEGGTTGSFKRS) are disordered.

It belongs to the AB hydrolase superfamily.

The catalysed reaction is [phosphatase 2A protein]-C-terminal L-leucine methyl ester + H2O = [phosphatase 2A protein]-C-terminal L-leucine + methanol + H(+). In terms of biological role, demethylates proteins that have been reversibly carboxymethylated. Demethylates the phosphatase PP2A catalytic subunit. In Emericella nidulans (strain FGSC A4 / ATCC 38163 / CBS 112.46 / NRRL 194 / M139) (Aspergillus nidulans), this protein is Protein phosphatase methylesterase 1 (ppe1).